Consider the following 124-residue polypeptide: Large ribosomal subunit protein bL12 (124 aa).

The protein belongs to the bacterial ribosomal protein bL12 family. Homodimer. Part of the ribosomal stalk of the 50S ribosomal subunit. Forms a multimeric L10(L12)X complex, where L10 forms an elongated spine to which 2 to 4 L12 dimers bind in a sequential fashion. Binds GTP-bound translation factors.

Its function is as follows. Forms part of the ribosomal stalk which helps the ribosome interact with GTP-bound translation factors. Is thus essential for accurate translation. The protein is Large ribosomal subunit protein bL12 of Cupriavidus pinatubonensis (strain JMP 134 / LMG 1197) (Cupriavidus necator (strain JMP 134)).